A 448-amino-acid polypeptide reads, in one-letter code: Trigger factor (448 aa).

The PPIase FKBP-type domain occupies 167–253 (GSIVRVDFVE…LKDIKRRDIP (87 aa)).

Belongs to the FKBP-type PPIase family. Tig subfamily.

The protein localises to the cytoplasm. It catalyses the reaction [protein]-peptidylproline (omega=180) = [protein]-peptidylproline (omega=0). Its function is as follows. Involved in protein export. Acts as a chaperone by maintaining the newly synthesized protein in an open conformation. Functions as a peptidyl-prolyl cis-trans isomerase. This chain is Trigger factor, found in Borrelia turicatae (strain 91E135).